Reading from the N-terminus, the 801-residue chain is Ferredoxin:CoB-CoM heterodisulfide reductase subunit A (801 aa).

149–172 contacts FAD; sequence GGGIAGITAALNLADNGVSTVLVE. 4Fe-4S ferredoxin-type domains are found at residues 239–269 and 285–320; these read KKPR…FNCG and PKIY…FSQK. [4Fe-4S] cluster-binding residues include Cys-248, Cys-251, Cys-254, Cys-258, Cys-295, Cys-303, Cys-306, and Cys-310. Residues 382 to 409 are disordered; the sequence is FSKASSDPTPATCDSRCEDSSDESQGTD. 2 consecutive 4Fe-4S ferredoxin-type domains span residues 606-634 and 635-664; these read EIAT…VNES and GRVV…IAGF. Cys-615, Cys-618, Cys-621, Cys-624, Cys-644, Cys-647, Cys-650, and Cys-654 together coordinate [4Fe-4S] cluster.

The protein belongs to the HdrA family. The ferredoxin:CoB-CoM heterodisulfide reductase is composed of three subunits; HdrA1, HdrB1 and HdrC1. [4Fe-4S] cluster is required as a cofactor. The cofactor is FAD.

It localises to the cytoplasm. It carries out the reaction coenzyme B + coenzyme M + 2 oxidized [2Fe-2S]-[ferredoxin] = coenzyme M-coenzyme B heterodisulfide + 2 reduced [2Fe-2S]-[ferredoxin] + 2 H(+). It participates in cofactor metabolism; coenzyme M-coenzyme B heterodisulfide reduction; coenzyme B and coenzyme M from coenzyme M-coenzyme B heterodisulfide: step 1/1. In terms of biological role, part of a complex that catalyzes the reversible reduction of CoM-S-S-CoB to the thiol-coenzymes H-S-CoM (coenzyme M) and H-S-CoB (coenzyme B). Probably involved in methylotrophic methanogenesis but not in aceticlastic methanogenesis. The sequence is that of Ferredoxin:CoB-CoM heterodisulfide reductase subunit A from Methanosarcina acetivorans (strain ATCC 35395 / DSM 2834 / JCM 12185 / C2A).